Reading from the N-terminus, the 107-residue chain is MGDSVLSAIQQTIIQRKSADPSESYVAQLLHKGEDKILKKVIEEAGEVLMASKDKDPSHLVYEVADLWFHTMILLTHHDLKAEDVLDELSRRQGLSGLAEKAARTES.

The protein belongs to the PRA-PH family.

It is found in the cytoplasm. It catalyses the reaction 1-(5-phospho-beta-D-ribosyl)-ATP + H2O = 1-(5-phospho-beta-D-ribosyl)-5'-AMP + diphosphate + H(+). It participates in amino-acid biosynthesis; L-histidine biosynthesis; L-histidine from 5-phospho-alpha-D-ribose 1-diphosphate: step 2/9. In Neisseria gonorrhoeae (strain ATCC 700825 / FA 1090), this protein is Phosphoribosyl-ATP pyrophosphatase.